The sequence spans 449 residues: Heterogeneous nuclear ribonucleoprotein H (449 aa).

Position 1 is an N-acetylmethionine (Met1). N-acetylmethionine; in Heterogeneous nuclear ribonucleoprotein H, N-terminally processed is present on Met2. Residues 11–90 form the RRM 1 domain; that stretch reads FVVKVRGLPW…RYVEVFKSNN (80 aa). Ser23 is subject to Phosphoserine. A Glycyl lysine isopeptide (Lys-Gly) (interchain with G-Cter in SUMO2) cross-link involves residue Lys35. Phosphoserine is present on residues Ser54 and Ser63. Glycyl lysine isopeptide (Lys-Gly) (interchain with G-Cter in SUMO2) cross-links involve residues Lys87 and Lys98. One can recognise an RRM 2 domain in the interval 111–188; sequence GFVRLRGLPF…RYIEIFKSSR (78 aa). Residue Arg233 is modified to Dimethylated arginine; alternate. At Arg233 the chain carries Omega-N-methylarginine; alternate. A 1-1 repeat occupies 234–249; that stretch reads GAYGGGYGGYDDYNGY. The tract at residues 234–433 is 2 X 16 AA Gly-rich approximate repeats; it reads GAYGGGYGGY…YGGQSSMSGY (200 aa). Residue Tyr246 is modified to Phosphotyrosine. The RRM 3 domain maps to 289-364; sequence HCVHMRGLPY…RYVELFLNST (76 aa). Ser310 is subject to Phosphoserine. Tandem repeats lie at residues 354 to 372, 374 to 392, and 418 to 433. A 2 X 19 AA perfect repeats region spans residues 354-392; sequence HRYVELFLNSTAGASGGAYEHRYVELFLNSTAGASGGAY.

Part of a ternary complex containing FUBP2, PTBP1, PTBP2 and HNRNPH1. Identified in the spliceosome C complex. Interacts with IGF2BP1. Interacts with CUGBP1; the interaction is RNA-dependent. Interacts with MBNL1; the interaction in RNA-independent.

The protein resides in the nucleus. It is found in the nucleoplasm. In terms of biological role, this protein is a component of the heterogeneous nuclear ribonucleoprotein (hnRNP) complexes which provide the substrate for the processing events that pre-mRNAs undergo before becoming functional, translatable mRNAs in the cytoplasm. Mediates pre-mRNA alternative splicing regulation. Inhibits, together with CUGBP1, insulin receptor (IR) pre-mRNA exon 11 inclusion in myoblast. Binds to the IR RNA. Binds poly(RG). This Rattus norvegicus (Rat) protein is Heterogeneous nuclear ribonucleoprotein H (Hnrnph1).